A 792-amino-acid chain; its full sequence is MADAWEEIRRLAADFQRAQFAEATQRLSERNCIEIVNKLIAQKQLEVVHTLDGKEYITPAQISKEMRDELHVRGGRVNIVDLQQAINVDLTHIENRIGDIVKSEKHVQLVLGQLIDENYLDRLAEEVNDKLQESGQVTIAELCKTYDLPGNFLTQALTQRLGRIINGHIDLDNRGVIFTEAFVSRHKARIRGLFSAITRPTAVNSLISRYGFQEQLLYSVLEELVNDGRLRGTVVGGRQDKAVFIPDIYSRTQSTWVDSFLRQNGYLEFDALSRLGIPDAMSYIKKRYKTTQLLFLKAACVGQGLVDQVEASVEEAISSGTWVDIAPLLPSSLSVEDAAILLQHVMRALSKQASAVVFSDTIVVSEKFINDCTDLFSELMHQKAEKEMKNNPVHLITEEDLKQISILESINTSKKDKKDERRRKATEGSGSVRGGGGSNAREYKIKKTKKKGRKDDDSDDESSHTGKKKPEITFMFQDEIEDFLRKHLQDAPEEFISELAEYLIKPLNKTYLEVVHSVYMSSTSSASGTGRKRTIKDLQEEVSNLYNNIRLFEKGMKFFTDDTQAALTKHLLKTVCTDITNLVFNFLASDLMMAVDDPATITSEVRKKILSKLSEETKVALTKLHNSLNEKSIEDFLACLDSAAEACDIMLKKGDKKRERQVLFQHRQALVEQLKVTEDPALTLHLTSVLLFQFSTHSMLHAPGRCVPQIIAFLSSKIPEDQHALLVKYQGLVVKHLVSQNKKTGQGEDPLSDELDKEQEDIINTTRKELQELSSSIKDLVLKSRKSSVTEE.

Alanine 2 is subject to N-acetylalanine. Residues 2 to 200 (ADAWEEIRRL…RGLFSAITRP (199 aa)) are mediates interaction with DDRGK1. The segment at 2 to 212 (ADAWEEIRRL…VNSLISRYGF (211 aa)) is required for E3 UFM1-protein ligase activity. Positions 121-250 (DRLAEEVNDK…KAVFIPDIYS (130 aa)) are involved in CDK5RAP3-binding. The interval 200 to 400 (PTAVNSLISR…NPVHLITEED (201 aa)) is mediates interaction with TRIP4. Residues 412 to 471 (TSKKDKKDERRRKATEGSGSVRGGGGSNAREYKIKKTKKKGRKDDDSDDESSHTGKKKPE) form a disordered region. At arginine 433 the chain carries Omega-N-methylarginine. Positions 453–471 (RKDDDSDDESSHTGKKKPE) are enriched in basic and acidic residues. A Phosphoserine modification is found at serine 458. Residues 488 to 682 (LQDAPEEFIS…QLKVTEDPAL (195 aa)) form a mediates interaction with CDK5RAP3 region. Position 534 is a phosphothreonine (threonine 534). Position 752 is a phosphoserine (serine 752).

It belongs to the UFL1 family. Catalytic component of the UFM1 ribosome E3 ligase (UREL) complex, composed of UFL1, DDRGK1 and CDK5RAP3. Interacts with E2-like enzyme UFC1. Interacts with RELA. Interacts with NBN; promoting recruitment to double-strand breaks following DNA damage. Interacts (when phosphorylated) with YWHAG/14-3-3-gamma; sequestering UFL1 and preventing its association with PDCD1/PD-1 substrate. In terms of processing, ubiquitinated, leading to its degradation by the proteasome. Interaction with CDK5RAP3 protects both proteins against ubiquitination and degradation via the proteasome. Phosphorylation at Thr-534 by AMPK promotes its interaction with YWHAG/14-3-3-gamma, thereby preventing UFL1 association with PDCD1/PD-1 substrate.

It is found in the endoplasmic reticulum membrane. The protein resides in the cytoplasm. It localises to the cytosol. The protein localises to the nucleus. Its subcellular location is the chromosome. Its function is as follows. E3 protein ligase that mediates ufmylation, the covalent attachment of the ubiquitin-like modifier UFM1 to lysine residues on target proteins, and which plays a key role in various processes, such as ribosome recycling, response to DNA damage, interferon response or reticulophagy (also called ER-phagy). Catalyzes ufmylation of many protein, such as CD274/PD-L1, CDK5RAP3, CYB5R3, DDRGK1, EIF6, histone H4, MRE11, P4HB, PDCD1/PD-1, TRIP4, RPN1, RPS20/uS10, RPL10/uL16, RPL26/uL24, SYVN1/HRD1 and TP53/p53. As part of the UREL complex, plays a key role in ribosome recycling by catalyzing mono-ufmylation of RPL26/uL24 subunit of the 60S ribosome. Ufmylation of RPL26/uL24 occurs on free 60S ribosomes following ribosome dissociation: it weakens the junction between post-termination 60S subunits and SEC61 translocons, promoting release and recycling of the large ribosomal subunit from the endoplasmic reticulum membrane. Ufmylation of RPL26/uL24 and subsequent 60S ribosome recycling either take place after normal termination of translation or after ribosome stalling during cotranslational translocation at the endoplasmic reticulum. Involved in reticulophagy in response to endoplasmic reticulum stress by mediating ufmylation of proteins such as CYB5R3 and RPN1, thereby promoting lysosomal degradation of ufmylated proteins. Ufmylation in response to endoplasmic reticulum stress is essential for processes such as hematopoiesis, blood vessel morphogenesis or inflammatory response. Regulates inflammation in response to endoplasmic reticulum stress by promoting reticulophagy, leading to inhibit the activity of the NF-kappa-B transcription factor. Mediates ufmylation of DDRGK1 and CDK5RAP3; the role of these modifications is however unclear: as both DDRGK1 and CDK5RAP3 act as substrate adapters for ufmylation, it is uncertain whether ufmylation of these proteins is, a collateral effect or is required for ufmylation. Acts as a negative regulator of T-cell activation by mediating ufmylation and stabilization of PDCD1/PD-1. Also involved in the response to DNA damage: recruited to double-strand break sites following DNA damage and mediates monoufmylation of histone H4 and ufmylation of MRE11. Mediates ufmylation of TP53/p53, promoting its stability. Catalyzes ufmylation of TRIP4, thereby playing a role in nuclear receptor-mediated transcription. Required for hematopoietic stem cell function and hematopoiesis. In Bos taurus (Bovine), this protein is E3 UFM1-protein ligase 1.